The following is a 698-amino-acid chain: Polyribonucleotide nucleotidyltransferase (698 aa).

Mg(2+) is bound by residues Asp-490 and Asp-496. A KH domain is found at 557-616 (PKVVTMTIKPDKIRDVIGPGGKKINEIIDETGVKLDIEQDGTIFIGAVDQAMINRAREII). An S1 motif domain is found at 626–694 (GQTYQATVKR…KQGRVNASHR (69 aa)).

It belongs to the polyribonucleotide nucleotidyltransferase family. Requires Mg(2+) as cofactor.

It is found in the cytoplasm. It carries out the reaction RNA(n+1) + phosphate = RNA(n) + a ribonucleoside 5'-diphosphate. In terms of biological role, involved in mRNA degradation. Catalyzes the phosphorolysis of single-stranded polyribonucleotides processively in the 3'- to 5'-direction. This is Polyribonucleotide nucleotidyltransferase from Staphylococcus aureus (strain bovine RF122 / ET3-1).